The following is a 483-amino-acid chain: GTPase Der (483 aa).

2 consecutive EngA-type G domains span residues 3 to 167 and 212 to 387; these read FTLA…GEER and LRIA…EIWN. Residues 9–16, 56–60, 119–122, 218–225, 265–269, and 330–333 contribute to the GTP site; these read GRPNVGKS, DTAGL, NKAE, GRPNAGKS, DTAGM, and NKWD. One can recognise a KH-like domain in the interval 388–472; that stretch reads RRISTGRLNR…PIRLSLRTSD (85 aa).

This sequence belongs to the TRAFAC class TrmE-Era-EngA-EngB-Septin-like GTPase superfamily. EngA (Der) GTPase family. Associates with the 50S ribosomal subunit.

Its function is as follows. GTPase that plays an essential role in the late steps of ribosome biogenesis. The chain is GTPase Der from Brucella melitensis biotype 2 (strain ATCC 23457).